A 281-amino-acid polypeptide reads, in one-letter code: MEANTRSTGRLPAAFLTPGSSSFMDFLSDQSPEMLPGNRSLPPLQGAVEAPHGTTIVSASFPGGVVLAGDRRATMGNMIASRDMQKVFPADEYSAVGIAGTAGLAVEMVKLFQLELEHFEKVEGAQLSLEGKANRLSTMIRSNLAMAMQGLAVVPLFAGYDVDREKGRIFSYDVTGGRTEESGYAATGSGSIFARNAMKKLYREDLTEEQALTLVVQALYDAADDDSATGGPDVARRIFPIVTVITDEGFRRLTDQESSEIARSILERRLEQPDGPRAALL.

Residues 1 to 53 constitute a propeptide, removed in mature form; by autocatalysis; that stretch reads MEANTRSTGRLPAAFLTPGSSSFMDFLSDQSPEMLPGNRSLPPLQGAVEAPHG. Threonine 54 (nucleophile) is an active-site residue.

Belongs to the peptidase T1B family. The 20S proteasome core is composed of 14 alpha and 14 beta subunits that assemble into four stacked heptameric rings, resulting in a barrel-shaped structure. The two inner rings, each composed of seven catalytic beta subunits, are sandwiched by two outer rings, each composed of seven alpha subunits. The catalytic chamber with the active sites is on the inside of the barrel. Has a gated structure, the ends of the cylinder being occluded by the N-termini of the alpha-subunits. Is capped by the proteasome-associated ATPase, ARC.

Its subcellular location is the cytoplasm. The catalysed reaction is Cleavage of peptide bonds with very broad specificity.. It participates in protein degradation; proteasomal Pup-dependent pathway. Its activity is regulated as follows. The formation of the proteasomal ATPase ARC-20S proteasome complex, likely via the docking of the C-termini of ARC into the intersubunit pockets in the alpha-rings, may trigger opening of the gate for substrate entry. Interconversion between the open-gate and close-gate conformations leads to a dynamic regulation of the 20S proteasome proteolysis activity. Its function is as follows. Component of the proteasome core, a large protease complex with broad specificity involved in protein degradation. The sequence is that of Proteasome subunit beta from Streptomyces griseus subsp. griseus (strain JCM 4626 / CBS 651.72 / NBRC 13350 / KCC S-0626 / ISP 5235).